Reading from the N-terminus, the 45-residue chain is Putative purine permease 9 (45 aa).

Not detected in seedlings, leaves, embryos or root and shoot meristems.

The sequence is that of Putative purine permease 9 from Arabidopsis thaliana (Mouse-ear cress).